Here is a 268-residue protein sequence, read N- to C-terminus: 3-methyl-2-oxobutanoate hydroxymethyltransferase (268 aa).

Residues D46 and D85 each contribute to the Mg(2+) site. 3-methyl-2-oxobutanoate-binding positions include 46-47 (DS), D85, and K115. E117 contributes to the Mg(2+) binding site. Catalysis depends on E184, which acts as the Proton acceptor.

The protein belongs to the PanB family. Homodecamer; pentamer of dimers. Requires Mg(2+) as cofactor.

It localises to the cytoplasm. It catalyses the reaction 3-methyl-2-oxobutanoate + (6R)-5,10-methylene-5,6,7,8-tetrahydrofolate + H2O = 2-dehydropantoate + (6S)-5,6,7,8-tetrahydrofolate. The protein operates within cofactor biosynthesis; (R)-pantothenate biosynthesis; (R)-pantoate from 3-methyl-2-oxobutanoate: step 1/2. In terms of biological role, catalyzes the reversible reaction in which hydroxymethyl group from 5,10-methylenetetrahydrofolate is transferred onto alpha-ketoisovalerate to form ketopantoate. The polypeptide is 3-methyl-2-oxobutanoate hydroxymethyltransferase (Magnetococcus marinus (strain ATCC BAA-1437 / JCM 17883 / MC-1)).